A 508-amino-acid chain; its full sequence is Phenylalanine--tRNA ligase alpha subunit (508 aa).

An N-acetylalanine modification is found at Ala-2. Position 190 is a phosphothreonine (Thr-190). Phosphoserine occurs at positions 193 and 301. Lys-311 is subject to N6-acetyllysine. L-phenylalanine-binding positions include Thr-329, Gln-372 to Glu-374, and Tyr-412. Residue Glu-414 participates in Mg(2+) binding. Phe-438 contributes to the L-phenylalanine binding site.

It belongs to the class-II aminoacyl-tRNA synthetase family. Phe-tRNA synthetase alpha subunit type 2 subfamily. As to quaternary structure, heterotetramer; dimer of two heterodimers formed by FARSA and FARSB. The cofactor is Mg(2+).

Its subcellular location is the cytoplasm. It catalyses the reaction tRNA(Phe) + L-phenylalanine + ATP = L-phenylalanyl-tRNA(Phe) + AMP + diphosphate + H(+). The polypeptide is Phenylalanine--tRNA ligase alpha subunit (FARSA) (Pongo abelii (Sumatran orangutan)).